The primary structure comprises 156 residues: MKARLIATGERAPSWVAQGFAEYQKRLSHWLPFELVEIEPGLRGKGRDPRRATEDEGKRVIAALPKNAYVVALDVPGRQLSSEQLAQRLEHWRGQGRDLAFLIGGPEGHSPEVSALADEKWSIGPLTLPHMLVRLVVAEQLYRAAAMLANHPYHRA.

Residues Leu73, Gly104, and 123–128 (IGPLTL) contribute to the S-adenosyl-L-methionine site.

The protein belongs to the RNA methyltransferase RlmH family. Homodimer.

Its subcellular location is the cytoplasm. It carries out the reaction pseudouridine(1915) in 23S rRNA + S-adenosyl-L-methionine = N(3)-methylpseudouridine(1915) in 23S rRNA + S-adenosyl-L-homocysteine + H(+). In terms of biological role, specifically methylates the pseudouridine at position 1915 (m3Psi1915) in 23S rRNA. This is Ribosomal RNA large subunit methyltransferase H from Stenotrophomonas maltophilia (strain R551-3).